We begin with the raw amino-acid sequence, 317 residues long: Probable cell division protein WhiA (317 aa).

Positions 276-310 form a DNA-binding region, H-T-H motif; it reads TLKELGEMVSGGKISKSGINHRLRKIDDIAEKLRA.

The protein belongs to the WhiA family.

Its function is as follows. Involved in cell division and chromosome segregation. This is Probable cell division protein WhiA from Bacillus thuringiensis (strain Al Hakam).